The chain runs to 616 residues: Centrosomal protein of 70 kDa (616 aa).

Coiled coils occupy residues 96–210 (EETT…EEER) and 273–335 (NYKG…NIKL). One copy of the TPR repeat lies at 502–535 (NGVFPRMNEVYTRLGEMNNAVRNLQELLELDSSS).

In terms of assembly, directly interacts with tubulin-gamma; this interaction determines centrosomal localization.

Its subcellular location is the cytoplasm. The protein localises to the cytoskeleton. The protein resides in the microtubule organizing center. It localises to the centrosome. Its function is as follows. Plays a role in the organization of both preexisting and nascent microtubules in interphase cells. During mitosis, required for the organization and orientation of the mitotic spindle. The protein is Centrosomal protein of 70 kDa (Cep70) of Mus musculus (Mouse).